The following is a 321-amino-acid chain: Probable arabinan endo-1,5-alpha-L-arabinosidase A (321 aa).

Residues 1–19 (MHPSTFVTTIACLAGLAHG) form the signal peptide. The Proton acceptor role is filled by aspartate 34. The active-site Proton donor is the glutamate 200.

This sequence belongs to the glycosyl hydrolase 43 family.

It localises to the secreted. It catalyses the reaction Endohydrolysis of (1-&gt;5)-alpha-arabinofuranosidic linkages in (1-&gt;5)-arabinans.. It functions in the pathway glycan metabolism; L-arabinan degradation. Its function is as follows. Endo-1,5-alpha-L-arabinanase involved in degradation of pectin. Its preferred substrate is linear 1,5-alpha-L-arabinan. The sequence is that of Probable arabinan endo-1,5-alpha-L-arabinosidase A (abnA) from Aspergillus clavatus (strain ATCC 1007 / CBS 513.65 / DSM 816 / NCTC 3887 / NRRL 1 / QM 1276 / 107).